The sequence spans 470 residues: Tubulin gamma chain (470 aa).

144–150 (AGGTGSG) serves as a coordination point for GTP.

This sequence belongs to the tubulin family.

It is found in the cytoplasm. Its subcellular location is the cytoskeleton. The protein localises to the microtubule organizing center. It localises to the spindle pole body. Tubulin is the major constituent of microtubules. The gamma chain is found at microtubule organizing centers (MTOC) such as the spindle poles or the centrosome, suggesting that it is involved in the minus-end nucleation of microtubule assembly. The sequence is that of Tubulin gamma chain (TUB4) from Eremothecium gossypii (strain ATCC 10895 / CBS 109.51 / FGSC 9923 / NRRL Y-1056) (Yeast).